Here is a 180-residue protein sequence, read N- to C-terminus: Riboflavin kinase (180 aa).

Mg(2+)-binding residues include T40 and N42. E117 serves as the catalytic Nucleophile.

Belongs to the flavokinase family. The cofactor is Zn(2+). Mg(2+) serves as cofactor.

It catalyses the reaction riboflavin + ATP = FMN + ADP + H(+). The protein operates within cofactor biosynthesis; FMN biosynthesis; FMN from riboflavin (ATP route): step 1/1. Its function is as follows. Catalyzes the phosphorylation of riboflavin (vitamin B2) to form flavin mononucleotide (FMN) coenzyme. In Meyerozyma guilliermondii (strain ATCC 6260 / CBS 566 / DSM 6381 / JCM 1539 / NBRC 10279 / NRRL Y-324) (Yeast), this protein is Riboflavin kinase (FMN1).